The sequence spans 77 residues: U8-lycotoxin-Ls1m (77 aa).

A signal peptide spans 1–20 (MKLMIFTGLVLFAIVRLIEA). Positions 21–26 (QAENEK) are excised as a propeptide.

It belongs to the neurotoxin 19 (CSTX) family. 08 (U8-Lctx) subfamily. Post-translationally, contains 4 disulfide bonds. In terms of tissue distribution, expressed by the venom gland.

The protein resides in the secreted. This chain is U8-lycotoxin-Ls1m, found in Lycosa singoriensis (Wolf spider).